Here is a 152-residue protein sequence, read N- to C-terminus: Deoxyuridine 5'-triphosphate nucleotidohydrolase (152 aa).

Substrate contacts are provided by residues 71–73, Asn-84, 88–90, and Lys-98; these read RSG and LID.

This sequence belongs to the dUTPase family. It depends on Mg(2+) as a cofactor.

It catalyses the reaction dUTP + H2O = dUMP + diphosphate + H(+). It participates in pyrimidine metabolism; dUMP biosynthesis; dUMP from dCTP (dUTP route): step 2/2. This enzyme is involved in nucleotide metabolism: it produces dUMP, the immediate precursor of thymidine nucleotides and it decreases the intracellular concentration of dUTP so that uracil cannot be incorporated into DNA. This is Deoxyuridine 5'-triphosphate nucleotidohydrolase from Legionella pneumophila subsp. pneumophila (strain Philadelphia 1 / ATCC 33152 / DSM 7513).